The primary structure comprises 323 residues: Sphingolipid delta(4)-desaturase/C4-monooxygenase DES2 (323 aa).

The N-myristoyl glycine moiety is linked to residue glycine 2. 2 helical membrane passes run 45–65 and 68–88; these read WTVT…QGLA and WLFF…TLAI. The Histidine box-1 motif lies at 89–93; sequence HDISH. A required for C4-hydroxylase activity region spans residues 95–99; the sequence is TAFGT. The Histidine box-2 motif lies at 128 to 132; sequence HVDHH. Residues 209 to 231 traverse the membrane as a helical segment; sequence MVYLLASSLLGLGLHPISGHFVA. The short motif at 259 to 263 is the Histidine box-3 element; that stretch reads HMEHH.

The protein belongs to the fatty acid desaturase type 1 family. DEGS subfamily.

The protein resides in the endoplasmic reticulum membrane. It catalyses the reaction a dihydroceramide + 2 Fe(II)-[cytochrome b5] + O2 + 2 H(+) = a phytoceramide + 2 Fe(III)-[cytochrome b5] + H2O. The enzyme catalyses an N-acylsphinganine + 2 Fe(II)-[cytochrome b5] + O2 + 2 H(+) = an N-acylsphing-4-enine + 2 Fe(III)-[cytochrome b5] + 2 H2O. It carries out the reaction N-octanoylsphinganine + 2 Fe(II)-[cytochrome b5] + O2 + 2 H(+) = N-octanoyl-4-hydroxysphinganine + 2 Fe(III)-[cytochrome b5] + H2O. The catalysed reaction is an N-acylsphinganine + 2 Fe(II)-[cytochrome b5] + O2 + 2 H(+) = an N-acyl-(4R)-4-hydroxysphinganine + 2 Fe(III)-[cytochrome b5] + H2O. It participates in membrane lipid metabolism; sphingolipid biosynthesis. Bifunctional enzyme which acts both as a sphingolipid delta(4)-desaturase and a sphingolipid C4-monooxygenase. The polypeptide is Sphingolipid delta(4)-desaturase/C4-monooxygenase DES2 (Bos taurus (Bovine)).